Here is a 64-residue protein sequence, read N- to C-terminus: Large ribosomal subunit protein bL35 (64 aa).

It belongs to the bacterial ribosomal protein bL35 family.

In Vibrio metschnikovii, this protein is Large ribosomal subunit protein bL35.